Here is a 180-residue protein sequence, read N- to C-terminus: NADH-quinone oxidoreductase subunit I (180 aa).

4Fe-4S ferredoxin-type domains follow at residues 50–80 and 90–119; these read LTRDPDGEERCVACNLCAVACPVGCISLQKA and EFFRINFSRCIFCGLCEEACPTTAIQLTPD. [4Fe-4S] cluster contacts are provided by cysteine 60, cysteine 63, cysteine 66, cysteine 70, cysteine 99, cysteine 102, cysteine 105, and cysteine 109.

Belongs to the complex I 23 kDa subunit family. NDH-1 is composed of 13 different subunits. Subunits NuoA, H, J, K, L, M, N constitute the membrane sector of the complex. The cofactor is [4Fe-4S] cluster.

The protein resides in the cell inner membrane. The enzyme catalyses a quinone + NADH + 5 H(+)(in) = a quinol + NAD(+) + 4 H(+)(out). In terms of biological role, NDH-1 shuttles electrons from NADH, via FMN and iron-sulfur (Fe-S) centers, to quinones in the respiratory chain. The immediate electron acceptor for the enzyme in this species is believed to be ubiquinone. Couples the redox reaction to proton translocation (for every two electrons transferred, four hydrogen ions are translocated across the cytoplasmic membrane), and thus conserves the redox energy in a proton gradient. This is NADH-quinone oxidoreductase subunit I from Shigella sonnei (strain Ss046).